Consider the following 450-residue polypeptide: 23S rRNA (uracil(1939)-C(5))-methyltransferase RlmD (450 aa).

Residues 12 to 70 (SKQLSAKLSLNVDQLDHLGAGIAQYQGKVVFIPGALPDETVTVQLTEQKKNYARAKLIK) form the TRAM domain. The [4Fe-4S] cluster site is built by cysteine 83, cysteine 89, cysteine 92, and cysteine 171. The S-adenosyl-L-methionine site is built by glutamine 283, phenylalanine 312, asparagine 317, glutamate 333, aspartate 360, and aspartate 380. Cysteine 406 functions as the Nucleophile in the catalytic mechanism.

Belongs to the class I-like SAM-binding methyltransferase superfamily. RNA M5U methyltransferase family. RlmD subfamily.

It catalyses the reaction uridine(1939) in 23S rRNA + S-adenosyl-L-methionine = 5-methyluridine(1939) in 23S rRNA + S-adenosyl-L-homocysteine + H(+). Its function is as follows. Catalyzes the formation of 5-methyl-uridine at position 1939 (m5U1939) in 23S rRNA. This Shewanella putrefaciens (strain CN-32 / ATCC BAA-453) protein is 23S rRNA (uracil(1939)-C(5))-methyltransferase RlmD.